The sequence spans 73 residues: Translation initiation factor IF-1 (73 aa).

An S1-like domain is found at 1–73; the sequence is MAKKEDTIVL…TKARVVYRHR (73 aa).

The protein belongs to the IF-1 family. Component of the 30S ribosomal translation pre-initiation complex which assembles on the 30S ribosome in the order IF-2 and IF-3, IF-1 and N-formylmethionyl-tRNA(fMet); mRNA recruitment can occur at any time during PIC assembly.

The protein resides in the cytoplasm. One of the essential components for the initiation of protein synthesis. Stabilizes the binding of IF-2 and IF-3 on the 30S subunit to which N-formylmethionyl-tRNA(fMet) subsequently binds. Helps modulate mRNA selection, yielding the 30S pre-initiation complex (PIC). Upon addition of the 50S ribosomal subunit IF-1, IF-2 and IF-3 are released leaving the mature 70S translation initiation complex. The chain is Translation initiation factor IF-1 from Chlamydia abortus (strain DSM 27085 / S26/3) (Chlamydophila abortus).